The chain runs to 236 residues: Histone H1 (236 aa).

Positions 1–10 (MPPKKTETKA) are enriched in basic and acidic residues. 2 disordered regions span residues 1–36 (MPPK…SPST) and 94–236 (KGVF…AEKA). Over residues 11–36 (ADASAAAAPAPAAAPTSAPKTKSPST) the composition is skewed to low complexity. In terms of domain architecture, H15 spans 36–111 (THASYLDMIT…GPSGGTKLAK (76 aa)). The segment covering 109-122 (LAKKVAKPAPKKAA) has biased composition (basic residues). The span at 123-150 (PKKETKEKKPAAAKKEGAAKKETKEKKA) shows a compositional bias: basic and acidic residues. Low complexity predominate over residues 153-162 (AKKAAAPKKA). A compositionally biased stretch (basic and acidic residues) spans 165–174 (PKKEVKEKKA). A compositionally biased stretch (low complexity) spans 202–220 (AKSTAKPAAAKKAAAPKKA). Residues 224 to 236 (KKAEKAEPAAEKA) show a composition bias toward basic and acidic residues.

The protein belongs to the histone H1/H5 family.

Its subcellular location is the nucleus. It localises to the chromosome. Its function is as follows. Could act as an H1-type linker histone. The chain is Histone H1 (hH1) from Neurospora crassa (strain ATCC 24698 / 74-OR23-1A / CBS 708.71 / DSM 1257 / FGSC 987).